Here is a 1430-residue protein sequence, read N- to C-terminus: DNA-directed RNA polymerase subunit beta' (1430 aa).

Residues Cys70, Cys72, Cys85, and Cys88 each contribute to the Zn(2+) site. The Mg(2+) site is built by Asp495, Asp497, and Asp499. The Zn(2+) site is built by Cys838, Cys912, Cys919, and Cys922.

This sequence belongs to the RNA polymerase beta' chain family. The RNAP catalytic core consists of 2 alpha, 1 beta, 1 beta' and 1 omega subunit. When a sigma factor is associated with the core the holoenzyme is formed, which can initiate transcription. It depends on Mg(2+) as a cofactor. Requires Zn(2+) as cofactor.

It carries out the reaction RNA(n) + a ribonucleoside 5'-triphosphate = RNA(n+1) + diphosphate. In terms of biological role, DNA-dependent RNA polymerase catalyzes the transcription of DNA into RNA using the four ribonucleoside triphosphates as substrates. The sequence is that of DNA-directed RNA polymerase subunit beta' from Rhodospirillum centenum (strain ATCC 51521 / SW).